Reading from the N-terminus, the 485-residue chain is Maturase K (485 aa).

The protein belongs to the intron maturase 2 family. MatK subfamily.

It localises to the plastid. Its subcellular location is the chloroplast. Its function is as follows. Usually encoded in the trnK tRNA gene intron. Probably assists in splicing its own and other chloroplast group II introns. The protein is Maturase K of Malus domestica (Apple).